We begin with the raw amino-acid sequence, 426 residues long: D-tagatose-1,6-bisphosphate aldolase subunit KbaZ (426 aa).

The protein belongs to the GatZ/KbaZ family. KbaZ subfamily. As to quaternary structure, forms a complex with KbaY.

The protein operates within carbohydrate metabolism; D-tagatose 6-phosphate degradation; D-glyceraldehyde 3-phosphate and glycerone phosphate from D-tagatose 6-phosphate: step 2/2. Component of the tagatose-1,6-bisphosphate aldolase KbaYZ that is required for full activity and stability of the Y subunit. Could have a chaperone-like function for the proper and stable folding of KbaY. When expressed alone, KbaZ does not show any aldolase activity. This chain is D-tagatose-1,6-bisphosphate aldolase subunit KbaZ, found in Escherichia coli O127:H6 (strain E2348/69 / EPEC).